The sequence spans 744 residues: Cell surface receptor daf-4 (744 aa).

The first 31 residues, 1-31, serve as a signal peptide directing secretion; the sequence is MNQKGTVRLKALVLICLPLFLIATPVPVAVT. The Extracellular segment spans residues 48–253; that stretch reads WANTLVSKVA…IALLILAYVG (206 aa). Residues Asn-60, Asn-134, and Asn-165 are each glycosylated (N-linked (GlcNAc...) asparagine). The helical transmembrane segment at 254–274 threads the bilayer; it reads WKFQQNKKEEIKKQQKIKFDM. Residues 275–744 are Cytoplasmic-facing; sequence EKTDALEAGN…PSGTFGTFTT (470 aa). One can recognise a Protein kinase domain in the interval 306-603; the sequence is ITDFQLISKG…FARVWNHIMS (298 aa). ATP contacts are provided by residues 312–320 and Lys-338; that span reads ISKGRFGKV. Residue Asp-440 is the Proton acceptor of the active site. Disordered regions lie at residues 605-686 and 724-744; these read PDSS…PEPE and AGADTRASTPTPSGTFGTFTT. Residues 620-639 are compositionally biased toward basic and acidic residues; it reads RGVDDVEQSEKPEGIEEMQH. Over residues 731–744 the composition is skewed to low complexity; the sequence is STPTPSGTFGTFTT.

This sequence belongs to the protein kinase superfamily. TKL Ser/Thr protein kinase family. TGFB receptor subfamily. In terms of assembly, may interact with daf-1 to regulate dauer larva development. Interacts with sma-10. Pharynx, intestine, hypodermis and body wall muscles in L1 through to adult stages. Also expressed in head neurons, ventral cord and tail neurons. Subset of head neurons show coexpression with daf-1 when dauer/nondauer decision is made.

Its subcellular location is the cell membrane. The catalysed reaction is L-threonyl-[receptor-protein] + ATP = O-phospho-L-threonyl-[receptor-protein] + ADP + H(+). The enzyme catalyses L-seryl-[receptor-protein] + ATP = O-phospho-L-seryl-[receptor-protein] + ADP + H(+). Involved in a TGF-beta pathway. May be a receptor for TGF-beta-like ligand daf-7. Controls the decision of whether or not larvae enter a developmentally arrested state, known as dauer, in response to environmental conditions. Regulates body size and male tail patterning. Involved in regulating entry into quiescence triggered by satiety. Involved in sensitivity to CO2 levels. The protein is Cell surface receptor daf-4 of Caenorhabditis elegans.